The chain runs to 305 residues: Zinc transporter ZIP9 (305 aa).

The helical transmembrane segment at 7-27 threads the bilayer; that stretch reads ICLLSLAMLVACYVAGIIPLA. Residue Asn29 is glycosylated (N-linked (GlcNAc...) asparagine). Helical transmembrane passes span 35-55, 104-124, 144-164, 174-194, and 208-228; these read LKLV…AVIV, AYIG…DQIG, ITTT…LGAA, LIVF…LVSF, and HLLV…LGLS. The N-linked (GlcNAc...) asparagine glycan is linked to Asn239. A run of 2 helical transmembrane segments spans residues 242-262 and 284-304; these read GVAM…HVLP and LEVA…IGHH.

The protein belongs to the ZIP transporter (TC 2.A.5) family.

It localises to the golgi apparatus. It is found in the trans-Golgi network membrane. Its subcellular location is the cell membrane. The protein resides in the cytoplasm. The protein localises to the perinuclear region. It localises to the mitochondrion. It is found in the nucleus. The catalysed reaction is Zn(2+)(in) = Zn(2+)(out). Transports zinc ions across cell and organelle membranes into the cytoplasm and regulates intracellular zinc homeostasis. Participates in the zinc ions efflux out of the secretory compartments. Regulates intracellular zinc level, resulting in the enhancement of AKT1 and MAPK3/MAPK1 (Erk1/2) phosphorylation in response to the BCR activation. Also functions as a membrane androgen receptor that mediates, through a G protein, the non-classical androgen signaling pathway, characterized by the activation of MAPK3/MAPK1 (Erk1/2) and transcription factors CREB1 or ATF1. Moreover, has dual functions as a membrane-bound androgen receptor and as an androgen-dependent zinc transporter both of which are mediated through an inhibitory G protein (Gi) that mediates both MAP kinase and zinc signaling leading to the androgen-dependent apoptotic process. This chain is Zinc transporter ZIP9, found in Gallus gallus (Chicken).